The following is a 676-amino-acid chain: Forkhead box protein biniou (676 aa).

Disordered regions lie at residues 22 to 50 (YHDP…GHPY), 131 to 160 (AHSA…SSST), 203 to 232 (QEQA…SRIS), 249 to 312 (NYSS…PEKP), and 583 to 651 (IQHA…AYLP). Residues 34 to 48 (PHAHSHPHQHTHTGH) are compositionally biased toward basic residues. Residues 133-160 (SAGSASPQSNSKTPTDLPQDLQYASSST) show a composition bias toward polar residues. The segment covering 203 to 220 (QEQAGQQQPQQLPAQQLQ) has biased composition (low complexity). Residues 257–273 (PAKSLNGSESSPPSQNH) show a composition bias toward polar residues. Positions 311–408 (KPALSYINMI…DEGSLRRRPR (98 aa)) form a DNA-binding region, fork-head. The segment covering 583 to 593 (IQHAQAQAQAQ) has biased composition (low complexity). The segment covering 594-611 (AHHHHHQHHASHPSHSHQ) has biased composition (basic residues). The span at 612–625 (GHGSMHQNHGTSST) shows a compositional bias: low complexity. The span at 637–647 (GIDHSPIDRKP) shows a compositional bias: basic and acidic residues.

In terms of assembly, binds to DNA. As to expression, in embryo, expressed in all types of visceral muscles and their progenitors (at protein level). In late stage 10 embryo, expressed in the caudal visceral mesoderm and trunk and hindgut visceral mesoderm progenitors.

The protein resides in the nucleus. Functionally, component of a regulatory network controlling visceral mesoderm development and midgut morphogenesis. Transcriptional regulator involved in the activation of a large number of genes in the visceral mesoderm including betaTub60D, dpp and Hand. Binds to and regulates a number of enhancers driving expression in the visceral mesoderm in a temporally and spatially restricted manner. Also to binds to enhancers cooperatively with activators, such as bap or HLH54F, to coregulate expression of shared target genes in the visceral mesoderm. Binds to the Ndg enhancer and drives expression of Ndg in the late visceral musculature. May be involved in the transcriptional regulation of wupA in the visceral mesoderm. Plays an indirect role in the later stages of salivary gland positioning. In Drosophila melanogaster (Fruit fly), this protein is Forkhead box protein biniou (bin).